The chain runs to 423 residues: MAGRRFGWSRAALLQLILGVNLMVMPRTQARTLRFVTLLYRHGDRSPVKAYPKDPHQEDKWPQGFGQLTKEGMLQHWELGQALRQRYHGFLNTSYHRQEVYVRSTDFDRTLMSAEANLAGLFPPDGIQRFNPNISWQPIPVHTVPVAEDRLLKFPLGPCPRFEQLQNETRRMPEYQNESVQNAQFLDMVANETGLTDLSLETVWNVYDTLFCEQTHGLPLPPWASPQTMQRLSRLKDFSFRFLFGIYKQAEKARLQGGVLLAQIRKNLTLMATTSQLPKLLVYSAHDTTLVALHMALGVYNGEQAPYASCHMFELYQEDSGNFSVEMYFRNESHRAPWPLTLPGCSHRCPLQDFLRLTEPVVPKDWLQECQLAGGPADTEVIVALAVCGSILFLLIVLLLTVLFRVQAQPPGYRHVPDGEDHA.

The first 30 residues, 1-30 (MAGRRFGWSRAALLQLILGVNLMVMPRTQA), serve as a signal peptide directing secretion. Topologically, residues 31 to 380 (RTLRFVTLLY…QLAGGPADTE (350 aa)) are lumenal. H42 (nucleophile) is an active-site residue. Residues N92, N133, N167, N177, N191, and N267 are each glycosylated (N-linked (GlcNAc...) asparagine). 3 disulfides stabilise this stretch: C159/C370, C212/C310, and C345/C349. The active-site Proton donor is D287. N322 and N331 each carry an N-linked (GlcNAc...) asparagine glycan. A helical transmembrane segment spans residues 381–401 (VIVALAVCGSILFLLIVLLLT). Over 402–423 (VLFRVQAQPPGYRHVPDGEDHA) the chain is Cytoplasmic.

Belongs to the histidine acid phosphatase family. The membrane-bound form is converted to the soluble form by sequential proteolytic processing. First, the C-terminal cytoplasmic tail is removed. Cleavage by a lysosomal protease releases the soluble form in the lysosome lumen.

It is found in the lysosome membrane. The protein resides in the lysosome lumen. The catalysed reaction is a phosphate monoester + H2O = an alcohol + phosphate. This Bos taurus (Bovine) protein is Lysosomal acid phosphatase (ACP2).